The sequence spans 120 residues: MFLNYFALGVLIFVFLVIFYGIIAIHDIPYLIAKKRNHPHADAIHTAGWVSLFTLHVIWPFLWIWATLYQPERGWGMQSHVASQEKATDPEIAALSDRISRLEHQLAAEKKTDYSTFPEI.

To E.coli YiaW.

This is an uncharacterized protein from Escherichia coli (strain K12).